Here is a 251-residue protein sequence, read N- to C-terminus: Pyridoxine 5'-phosphate synthase (251 aa).

Asn-7 serves as a coordination point for 3-amino-2-oxopropyl phosphate. 9–10 is a 1-deoxy-D-xylulose 5-phosphate binding site; it reads DH. Position 18 (Arg-18) interacts with 3-amino-2-oxopropyl phosphate. The Proton acceptor role is filled by His-43. Residues Arg-45 and His-50 each coordinate 1-deoxy-D-xylulose 5-phosphate. Glu-70 acts as the Proton acceptor in catalysis. Position 100 (Thr-100) interacts with 1-deoxy-D-xylulose 5-phosphate. His-198 serves as the catalytic Proton donor. 3-amino-2-oxopropyl phosphate contacts are provided by residues Ala-199 and 220-221; that span reads GH.

This sequence belongs to the PNP synthase family. In terms of assembly, homooctamer; tetramer of dimers.

It is found in the cytoplasm. The enzyme catalyses 3-amino-2-oxopropyl phosphate + 1-deoxy-D-xylulose 5-phosphate = pyridoxine 5'-phosphate + phosphate + 2 H2O + H(+). It participates in cofactor biosynthesis; pyridoxine 5'-phosphate biosynthesis; pyridoxine 5'-phosphate from D-erythrose 4-phosphate: step 5/5. Catalyzes the complicated ring closure reaction between the two acyclic compounds 1-deoxy-D-xylulose-5-phosphate (DXP) and 3-amino-2-oxopropyl phosphate (1-amino-acetone-3-phosphate or AAP) to form pyridoxine 5'-phosphate (PNP) and inorganic phosphate. In Dechloromonas aromatica (strain RCB), this protein is Pyridoxine 5'-phosphate synthase.